A 141-amino-acid chain; its full sequence is Large ribosomal subunit protein uL11c (141 aa).

It belongs to the universal ribosomal protein uL11 family. As to quaternary structure, part of the ribosomal stalk of the 50S ribosomal subunit. Interacts with L10 and the large rRNA to form the base of the stalk. L10 forms an elongated spine to which L12 dimers bind in a sequential fashion forming a multimeric L10(L12)X complex.

The protein resides in the plastid. Its subcellular location is the cyanelle. Its function is as follows. Forms part of the ribosomal stalk which helps the ribosome interact with GTP-bound translation factors. This is Large ribosomal subunit protein uL11c from Cyanophora paradoxa.